The primary structure comprises 552 residues: Putative transport protein ECA4401 (552 aa).

Transmembrane regions (helical) follow at residues 4 to 24 (IALT…IGNW), 26 to 46 (IYGV…VGHV), 65 to 85 (FGLI…FFSS), 90 to 112 (GLRL…VMLH), and 158 to 178 (TGYA…MWLM). 2 consecutive RCK C-terminal domains span residues 191-276 (KQFE…VIGN) and 279-361 (ETSL…IVGN). 6 consecutive transmembrane segments (helical) span residues 371-391 (MLPV…PLMV), 393-413 (GFPV…ALVL), 439-459 (IVLF…DTLL), 464-484 (VWWI…VGIL), 493-513 (YLTL…LAFA), and 530-550 (VYPL…VLFL).

This sequence belongs to the AAE transporter (TC 2.A.81) family. YidE subfamily.

It is found in the cell membrane. The chain is Putative transport protein ECA4401 from Pectobacterium atrosepticum (strain SCRI 1043 / ATCC BAA-672) (Erwinia carotovora subsp. atroseptica).